Reading from the N-terminus, the 251-residue chain is tRNA (guanine-N(7)-)-methyltransferase (251 aa).

Positions 80, 105, 132, and 155 each coordinate S-adenosyl-L-methionine. Aspartate 155 is a catalytic residue. Substrate is bound by residues lysine 159, aspartate 191, and 228-231 (TKFE).

The protein belongs to the class I-like SAM-binding methyltransferase superfamily. TrmB family.

The catalysed reaction is guanosine(46) in tRNA + S-adenosyl-L-methionine = N(7)-methylguanosine(46) in tRNA + S-adenosyl-L-homocysteine. The protein operates within tRNA modification; N(7)-methylguanine-tRNA biosynthesis. Functionally, catalyzes the formation of N(7)-methylguanine at position 46 (m7G46) in tRNA. The protein is tRNA (guanine-N(7)-)-methyltransferase of Histophilus somni (strain 2336) (Haemophilus somnus).